The sequence spans 405 residues: Tryptophan synthase beta chain (405 aa).

Lysine 95 bears the N6-(pyridoxal phosphate)lysine mark.

Belongs to the TrpB family. As to quaternary structure, tetramer of two alpha and two beta chains. Pyridoxal 5'-phosphate serves as cofactor.

It carries out the reaction (1S,2R)-1-C-(indol-3-yl)glycerol 3-phosphate + L-serine = D-glyceraldehyde 3-phosphate + L-tryptophan + H2O. It functions in the pathway amino-acid biosynthesis; L-tryptophan biosynthesis; L-tryptophan from chorismate: step 5/5. The beta subunit is responsible for the synthesis of L-tryptophan from indole and L-serine. This chain is Tryptophan synthase beta chain, found in Pseudomonas entomophila (strain L48).